The primary structure comprises 96 residues: Glutamyl-tRNA(Gln) amidotransferase subunit C (96 aa).

This sequence belongs to the GatC family. Heterotrimer of A, B and C subunits.

It carries out the reaction L-glutamyl-tRNA(Gln) + L-glutamine + ATP + H2O = L-glutaminyl-tRNA(Gln) + L-glutamate + ADP + phosphate + H(+). It catalyses the reaction L-aspartyl-tRNA(Asn) + L-glutamine + ATP + H2O = L-asparaginyl-tRNA(Asn) + L-glutamate + ADP + phosphate + 2 H(+). Its function is as follows. Allows the formation of correctly charged Asn-tRNA(Asn) or Gln-tRNA(Gln) through the transamidation of misacylated Asp-tRNA(Asn) or Glu-tRNA(Gln) in organisms which lack either or both of asparaginyl-tRNA or glutaminyl-tRNA synthetases. The reaction takes place in the presence of glutamine and ATP through an activated phospho-Asp-tRNA(Asn) or phospho-Glu-tRNA(Gln). In Deinococcus radiodurans (strain ATCC 13939 / DSM 20539 / JCM 16871 / CCUG 27074 / LMG 4051 / NBRC 15346 / NCIMB 9279 / VKM B-1422 / R1), this protein is Glutamyl-tRNA(Gln) amidotransferase subunit C.